The primary structure comprises 298 residues: ATP phosphoribosyltransferase (298 aa).

The protein belongs to the ATP phosphoribosyltransferase family. Long subfamily. Requires Mg(2+) as cofactor.

The protein localises to the cytoplasm. It carries out the reaction 1-(5-phospho-beta-D-ribosyl)-ATP + diphosphate = 5-phospho-alpha-D-ribose 1-diphosphate + ATP. Its pathway is amino-acid biosynthesis; L-histidine biosynthesis; L-histidine from 5-phospho-alpha-D-ribose 1-diphosphate: step 1/9. With respect to regulation, feedback inhibited by histidine. Its function is as follows. Catalyzes the condensation of ATP and 5-phosphoribose 1-diphosphate to form N'-(5'-phosphoribosyl)-ATP (PR-ATP). Has a crucial role in the pathway because the rate of histidine biosynthesis seems to be controlled primarily by regulation of HisG enzymatic activity. The sequence is that of ATP phosphoribosyltransferase from Vibrio vulnificus (strain CMCP6).